Consider the following 284-residue polypeptide: Prolyl 4-hydroxylase subunit alpha (284 aa).

The Fe2OG dioxygenase domain occupies 169–284; that stretch reads NFNSIKTQTQ…PRIAITTWIY (116 aa). Histidine 191, aspartate 193, and histidine 266 together coordinate Fe cation. Arginine 276 contacts 2-oxoglutarate.

The protein belongs to the P4HA family. As to quaternary structure, heterotetramer of two alpha-1 chains and two beta chains (the beta chain is the multi-functional PDI). Fe(2+) is required as a cofactor. Requires L-ascorbate as cofactor.

It is found in the cytoplasm. The catalysed reaction is L-prolyl-[Skp1 protein] + 2-oxoglutarate + O2 = trans-4-hydroxy-L-prolyl-[Skp1 protein] + succinate + CO2. Inhibited by the prolyl-hydroxylase inhibitors alpha,alpha'-dipyridyl and ethyl 3,4-dihydroxybenzoate. In terms of biological role, catalyzes the post-translational formation of 4-hydroxyproline. Probably hydroxylates skp1 on Pro-143. This Dictyostelium discoideum (Social amoeba) protein is Prolyl 4-hydroxylase subunit alpha (phyA).